A 365-amino-acid chain; its full sequence is uncharacterized protein (365 aa).

Over 1-133 (MVLAKQWVLK…RKLDKNKVGK (133 aa)) the chain is Cytoplasmic. A helical transmembrane segment spans residues 134-154 (LWWYLSVLGGTSLTAYFIFFT). Topologically, residues 155–169 (YAQLQEREEDYGKVY) are extracellular. Residues 170 to 190 (LISGAAGAVGTVCIQLALNVF) traverse the membrane as a helical segment. Residues 191 to 365 (KASKVIAIAG…KLITKVNNEE (175 aa)) are Cytoplasmic-facing.

The protein localises to the membrane. This is an uncharacterized protein from Saccharomyces cerevisiae (strain ATCC 204508 / S288c) (Baker's yeast).